The chain runs to 367 residues: Phosphoribosylaminoimidazole-succinocarboxamide synthase (367 aa).

It belongs to the SAICAR synthetase family.

The enzyme catalyses 5-amino-1-(5-phospho-D-ribosyl)imidazole-4-carboxylate + L-aspartate + ATP = (2S)-2-[5-amino-1-(5-phospho-beta-D-ribosyl)imidazole-4-carboxamido]succinate + ADP + phosphate + 2 H(+). It functions in the pathway purine metabolism; IMP biosynthesis via de novo pathway; 5-amino-1-(5-phospho-D-ribosyl)imidazole-4-carboxamide from 5-amino-1-(5-phospho-D-ribosyl)imidazole-4-carboxylate: step 1/2. The protein is Phosphoribosylaminoimidazole-succinocarboxamide synthase of Aliivibrio salmonicida (strain LFI1238) (Vibrio salmonicida (strain LFI1238)).